A 184-amino-acid polypeptide reads, in one-letter code: TATA-box-binding protein (184 aa).

2 repeat units span residues 9–85 (IENI…IDKL) and 100–178 (VQNI…KKEL).

The protein belongs to the TBP family.

Functionally, general factor that plays a role in the activation of archaeal genes transcribed by RNA polymerase. Binds specifically to the TATA box promoter element which lies close to the position of transcription initiation. This is TATA-box-binding protein from Thermoplasma volcanium (strain ATCC 51530 / DSM 4299 / JCM 9571 / NBRC 15438 / GSS1).